A 734-amino-acid chain; its full sequence is Polyphosphate kinase (734 aa).

N67 provides a ligand contact to ATP. Mg(2+) contacts are provided by R392 and R422. The PLD phosphodiesterase domain occupies 447 to 481; that stretch reads THLKTHSKIALVVKRINNELTSFVHLGTGNYNDKT. Residue H452 is the Phosphohistidine intermediate of the active site. ATP contacts are provided by Y485, R581, and H609. The segment at 705-734 is disordered; it reads KKQSVQPSGQPVHSRRGGSWMRKLKNTFKR.

Belongs to the polyphosphate kinase 1 (PPK1) family. It depends on Mg(2+) as a cofactor. Post-translationally, an intermediate of this reaction is the autophosphorylated ppk in which a phosphate is covalently linked to a histidine residue through a N-P bond.

The catalysed reaction is [phosphate](n) + ATP = [phosphate](n+1) + ADP. Catalyzes the reversible transfer of the terminal phosphate of ATP to form a long-chain polyphosphate (polyP). This is Polyphosphate kinase from Staphylococcus epidermidis (strain ATCC 12228 / FDA PCI 1200).